We begin with the raw amino-acid sequence, 444 residues long: Methylenetetrahydrofolate--tRNA-(uracil-5-)-methyltransferase TrmFO (444 aa).

11–16 contributes to the FAD binding site; that stretch reads GGGLAG.

Belongs to the MnmG family. TrmFO subfamily. The cofactor is FAD.

It is found in the cytoplasm. The enzyme catalyses uridine(54) in tRNA + (6R)-5,10-methylene-5,6,7,8-tetrahydrofolate + NADH + H(+) = 5-methyluridine(54) in tRNA + (6S)-5,6,7,8-tetrahydrofolate + NAD(+). It carries out the reaction uridine(54) in tRNA + (6R)-5,10-methylene-5,6,7,8-tetrahydrofolate + NADPH + H(+) = 5-methyluridine(54) in tRNA + (6S)-5,6,7,8-tetrahydrofolate + NADP(+). In terms of biological role, catalyzes the folate-dependent formation of 5-methyl-uridine at position 54 (M-5-U54) in all tRNAs. The chain is Methylenetetrahydrofolate--tRNA-(uracil-5-)-methyltransferase TrmFO from Desulfotalea psychrophila (strain LSv54 / DSM 12343).